The following is a 288-amino-acid chain: MAEITAALVKELRERTGEGMMDCKKALTKAGGDIEKAIDDMRASGAIKAAKKAGNVAAEGAIAIKDDGKAAVLLEVNSQTDFLALQDDFKAFVAASVEKAFADKLTDAAPLIEAQEAARLILVGKTGENVNIRRLARVEGDVVGTYLHGNKIGVAVVLKGGSVELAKDIAMHVAASNPEFLLPSQVSAEAIEREKAVFLQLNEDKMKGKPAEIVEKMIAGRISKFLAEASLVEQAFVKDPEITVGALAKKGGAEIVSFTRFAVGEGIEKKEDNFAEEVAAQLAAAKQQ.

Residues 80 to 83 form an involved in Mg(2+) ion dislocation from EF-Tu region; it reads TDFL.

The protein belongs to the EF-Ts family.

The protein localises to the cytoplasm. Its function is as follows. Associates with the EF-Tu.GDP complex and induces the exchange of GDP to GTP. It remains bound to the aminoacyl-tRNA.EF-Tu.GTP complex up to the GTP hydrolysis stage on the ribosome. The polypeptide is Elongation factor Ts (Pseudomonas fluorescens (strain ATCC BAA-477 / NRRL B-23932 / Pf-5)).